The chain runs to 72 residues: ATP synthase subunit c (72 aa).

2 helical membrane passes run 1-21 and 48-68; these read MSLG…GAGI and MFIG…FSFI.

This sequence belongs to the ATPase C chain family. As to quaternary structure, F-type ATPases have 2 components, F(1) - the catalytic core - and F(0) - the membrane proton channel. F(1) has five subunits: alpha(3), beta(3), gamma(1), delta(1), epsilon(1). F(0) has three main subunits: a(1), b(2) and c(10-14). The alpha and beta chains form an alternating ring which encloses part of the gamma chain. F(1) is attached to F(0) by a central stalk formed by the gamma and epsilon chains, while a peripheral stalk is formed by the delta and b chains.

The protein localises to the cell membrane. Functionally, f(1)F(0) ATP synthase produces ATP from ADP in the presence of a proton or sodium gradient. F-type ATPases consist of two structural domains, F(1) containing the extramembraneous catalytic core and F(0) containing the membrane proton channel, linked together by a central stalk and a peripheral stalk. During catalysis, ATP synthesis in the catalytic domain of F(1) is coupled via a rotary mechanism of the central stalk subunits to proton translocation. In terms of biological role, key component of the F(0) channel; it plays a direct role in translocation across the membrane. A homomeric c-ring of between 10-14 subunits forms the central stalk rotor element with the F(1) delta and epsilon subunits. This is ATP synthase subunit c from Geobacillus kaustophilus (strain HTA426).